Consider the following 306-residue polypeptide: MSTLGHQYDNSLVSNAFGFLRLPMNFQPYDSDADWVITGVPFDMATSGRAGGRHGPAAIRQVSTNLAWEHNRFPWNFDMRERLNVVDCGDLVYAFGDAREMSEKLQAHAEKLLAAGKRMLTFGGDHFVTLPLLRAHAKHFGKMALVHFDAHTDTYANGCEFDHGTMFYTAPKEGLIDPNHSVQIGIRTEFDKDNGFTVLDACQVNDRSVDDVIAQVKQIVGDMPVYLTFDIDCLDPAFAPGTGTPVIGGLTSDRAIKLVRGLKDLNIVGMDVVEVAPAYDQSEITALAAATLALEMLYIQAAKKGE.

Mn(2+)-binding residues include H126, D149, H151, D153, D230, and D232.

This sequence belongs to the arginase family. Agmatinase subfamily. Mn(2+) serves as cofactor.

It catalyses the reaction agmatine + H2O = urea + putrescine. Its pathway is amine and polyamine biosynthesis; putrescine biosynthesis via agmatine pathway; putrescine from agmatine: step 1/1. Catalyzes the formation of putrescine from agmatine. The sequence is that of Agmatinase from Shigella sonnei (strain Ss046).